The sequence spans 118 residues: Large ribosomal subunit protein uL18 (118 aa).

Residues 1-25 (MISKPDKNKLRQKRHRRVRGKLSGT) form a disordered region. A compositionally biased stretch (basic residues) spans 10–20 (LRQKRHRRVRG).

This sequence belongs to the universal ribosomal protein uL18 family. As to quaternary structure, part of the 50S ribosomal subunit; part of the 5S rRNA/L5/L18/L25 subcomplex. Contacts the 5S and 23S rRNAs.

Functionally, this is one of the proteins that bind and probably mediate the attachment of the 5S RNA into the large ribosomal subunit, where it forms part of the central protuberance. The chain is Large ribosomal subunit protein uL18 from Streptococcus pneumoniae (strain Hungary19A-6).